The primary structure comprises 473 residues: Arginine biosynthesis bifunctional protein ArgJ, mitochondrial (473 aa).

The substrate site is built by Thr201, Lys230, Thr241, Glu328, Asn468, and Thr473. Thr241 acts as the Nucleophile in catalysis.

This sequence belongs to the ArgJ family. Heterodimer of an alpha and a beta chain. The alpha and beta chains are autoproteolytically processed from a single precursor protein within the mitochondrion.

It localises to the mitochondrion matrix. It carries out the reaction N(2)-acetyl-L-ornithine + L-glutamate = N-acetyl-L-glutamate + L-ornithine. It catalyses the reaction L-glutamate + acetyl-CoA = N-acetyl-L-glutamate + CoA + H(+). Its pathway is amino-acid biosynthesis; L-arginine biosynthesis; L-ornithine and N-acetyl-L-glutamate from L-glutamate and N(2)-acetyl-L-ornithine (cyclic): step 1/1. It functions in the pathway amino-acid biosynthesis; L-arginine biosynthesis; N(2)-acetyl-L-ornithine from L-glutamate: step 1/4. Catalyzes two activities which are involved in the cyclic version of arginine biosynthesis: the synthesis of acetylglutamate from glutamate and acetyl-CoA, and of ornithine by transacetylation between acetylornithine and glutamate. In Ajellomyces capsulatus (strain G186AR / H82 / ATCC MYA-2454 / RMSCC 2432) (Darling's disease fungus), this protein is Arginine biosynthesis bifunctional protein ArgJ, mitochondrial.